The primary structure comprises 127 residues: UPF0102 protein Paes_0016 (127 aa).

This sequence belongs to the UPF0102 family.

The polypeptide is UPF0102 protein Paes_0016 (Prosthecochloris aestuarii (strain DSM 271 / SK 413)).